The following is a 785-amino-acid chain: MDAAIRGNDVIFVLKTIGVPSACRQNEDPRFVEAFKCDELERYIDNNPECTLFESLRDEEAYSIVRIFMDVDLDACLDEIDYLTAIQDFIIEVSNCVARFAFTECGAIHENVIKSMRSNFSLTKSTNRDKTSFHIIFLDTYTTMDTLIAMKRTLLELSRSSENPLTRSIDTAVYRRKTTLRVVGTRKNPNCDTIHVMQPPHDNIEDYLFTYVDMNNNSYYFSLQRRLEDLVPDKLWEPGFISFEDAIKRVSKIFINSIINFNDLDENNFTTVPLVIDYVTPCALCKKRSHKHPHQLSLENGAIRIYKTGNPHSCKVKIVPLDGNKLFNIAQRILDTNSVLLTERGDHIVWINNSWKFNSEEPLITKLILSIRHQLPKEYSSELLCPRKRKTVEANIRDMLVDSVETDTYPDKLPFKNGVLDLVDGMFYSGDDAKKYTCTVSTGFKFDDTKFVEDSPEMEELMNIINDIQPLTDENKKNRELYEKTLSSCLCGATKGCLTFFFGETATGKSTTKRLLKSAIGDLFVETGQTILTDVLDKGPNPFIANMHLKRSVFCSELPDFACSGSKKIRSDNIKKLTEPCVIGRPCFSNKINNRNHATIIIDTNYKPVFDRIDNALMRRIAVVRFRTHFSQPSGREAAENNDAYDKVKLLDEGLDGKIQNNRYRFAFLYLLVKWYKKYHIPIMKLYPTPEEIPDFAFYLKIGTLLVSSSVKHIPLMTDLSKKGYILYDNVVTLPLTTFQQKISKYFNSRLFGHDIESFINRHKKFANVSDEYLQYIFIEDISSP.

Belongs to the orthopoxvirus OPG117 family. In terms of assembly, homomultimer; hexamer. Interacts with OPG148.

The protein resides in the host cytoplasm. Its function is as follows. Multifunctional protein required for genome uncoating and replication. Major viral uncoating protein that is required for the release of the viral genome from incoming viral cores containing the viral DNA genome. Possesses an ATPase activity that is required for hexamerization and uncoating. The protein is Uncoating factor OPG117 (OPG117) of Cynomys gunnisoni (Gunnison's prairie dog).